The primary structure comprises 148 residues: UPF0756 membrane protein YeaL (148 aa).

4 consecutive transmembrane segments (helical) span residues 14-34, 51-71, 86-106, and 121-141; these read ALGF…LIIV, LSIG…SGTL, LVAI…VTLM, and VLGV…AGLV.

Belongs to the UPF0756 family.

The protein localises to the cell membrane. In Shigella boydii serotype 18 (strain CDC 3083-94 / BS512), this protein is UPF0756 membrane protein YeaL.